The primary structure comprises 421 residues: Probable indole-3-pyruvate monooxygenase YUCCA9 (421 aa).

29-34 (GAGPSG) is an FAD binding site. 196 to 201 (GCGNSG) is a binding site for NADP(+).

It belongs to the FMO family. It depends on FAD as a cofactor.

The catalysed reaction is indole-3-pyruvate + NADPH + O2 + H(+) = (indol-3-yl)acetate + CO2 + NADP(+) + H2O. It functions in the pathway plant hormone metabolism; auxin biosynthesis. In terms of biological role, involved in auxin biosynthesis. Belongs to the set of redundant YUCCA genes probably responsible for auxin biosynthesis in roots. The chain is Probable indole-3-pyruvate monooxygenase YUCCA9 (YUC9) from Arabidopsis thaliana (Mouse-ear cress).